The primary structure comprises 368 residues: 4-hydroxy-3-methylbut-2-en-1-yl diphosphate synthase (flavodoxin) (368 aa).

[4Fe-4S] cluster contacts are provided by Cys-268, Cys-271, Cys-303, and Glu-310.

It belongs to the IspG family. It depends on [4Fe-4S] cluster as a cofactor.

The catalysed reaction is (2E)-4-hydroxy-3-methylbut-2-enyl diphosphate + oxidized [flavodoxin] + H2O + 2 H(+) = 2-C-methyl-D-erythritol 2,4-cyclic diphosphate + reduced [flavodoxin]. The protein operates within isoprenoid biosynthesis; isopentenyl diphosphate biosynthesis via DXP pathway; isopentenyl diphosphate from 1-deoxy-D-xylulose 5-phosphate: step 5/6. Functionally, converts 2C-methyl-D-erythritol 2,4-cyclodiphosphate (ME-2,4cPP) into 1-hydroxy-2-methyl-2-(E)-butenyl 4-diphosphate. The sequence is that of 4-hydroxy-3-methylbut-2-en-1-yl diphosphate synthase (flavodoxin) from Listeria monocytogenes serovar 1/2a (strain ATCC BAA-679 / EGD-e).